The sequence spans 403 residues: 4-hydroxyphenylpyruvate dioxygenase (403 aa).

VOC domains lie at 25-169 (GYDH…LVER) and 201-359 (RIDH…LFTK). The Fe cation site is built by histidine 204, histidine 287, and glutamate 370.

The protein belongs to the 4HPPD family. As to quaternary structure, homodimer. Fe cation is required as a cofactor.

The catalysed reaction is 3-(4-hydroxyphenyl)pyruvate + O2 = homogentisate + CO2. It participates in amino-acid degradation; L-phenylalanine degradation; acetoacetate and fumarate from L-phenylalanine: step 3/6. In terms of biological role, 4-hydroxyphenylpyruvate dioxygenase; part of the L-tyrosine degradation gene cluster that mediates the biosynthesis of the brownish pigment pyomelanin as an alternative melanin. The 4-hydroxyphenylpyruvate dioxygenase hppD catalyzes the conversion of 4-hydroxyphenylpyruvate to homogentisic acid (HGA). The protein hmgX is crucial for this conversion and thus, probably functions as an accessory factor to mediate specific activity of hppD. The homogentisate 1,2-dioxygenase hmgA is then involved in the cleavage of the aromatic ring of HGA and its conversion to 4-maleylacetoacetate. When hmgA activity is lowered by the cell wall integrity (CWI) signaling pathway, HGA accumulates and leads to the production of pyomelanin through benzoquinone acetic acid after oxidation and polymerization. On the opposite, in non-stress conditions, both hppD and hmgA activities are balanced and HGA is degraded into 4-maleylacetoacetate. 4-maleylacetoacetate is further converted to 4-fumarylacetoacetate by the maleylacetoacetate isomerase maiA, which is degraded into fumarate and acetoacetate by the fumarylacetoacetase fahA. The sequence is that of 4-hydroxyphenylpyruvate dioxygenase from Aspergillus fumigatus (strain ATCC MYA-4609 / CBS 101355 / FGSC A1100 / Af293) (Neosartorya fumigata).